Consider the following 556-residue polypeptide: 2-succinyl-5-enolpyruvyl-6-hydroxy-3-cyclohexene-1-carboxylate synthase (556 aa).

This sequence belongs to the TPP enzyme family. MenD subfamily. As to quaternary structure, homodimer. Mg(2+) is required as a cofactor. Mn(2+) serves as cofactor. It depends on thiamine diphosphate as a cofactor.

It carries out the reaction isochorismate + 2-oxoglutarate + H(+) = 5-enolpyruvoyl-6-hydroxy-2-succinyl-cyclohex-3-ene-1-carboxylate + CO2. It participates in quinol/quinone metabolism; 1,4-dihydroxy-2-naphthoate biosynthesis; 1,4-dihydroxy-2-naphthoate from chorismate: step 2/7. Its pathway is quinol/quinone metabolism; menaquinone biosynthesis. Its function is as follows. Catalyzes the thiamine diphosphate-dependent decarboxylation of 2-oxoglutarate and the subsequent addition of the resulting succinic semialdehyde-thiamine pyrophosphate anion to isochorismate to yield 2-succinyl-5-enolpyruvyl-6-hydroxy-3-cyclohexene-1-carboxylate (SEPHCHC). This chain is 2-succinyl-5-enolpyruvyl-6-hydroxy-3-cyclohexene-1-carboxylate synthase, found in Escherichia coli O157:H7.